We begin with the raw amino-acid sequence, 301 residues long: Acetylglutamate kinase (301 aa).

Substrate contacts are provided by residues 68–69, arginine 90, and asparagine 195; that span reads GG.

The protein belongs to the acetylglutamate kinase family. ArgB subfamily.

It is found in the cytoplasm. It catalyses the reaction N-acetyl-L-glutamate + ATP = N-acetyl-L-glutamyl 5-phosphate + ADP. It functions in the pathway amino-acid biosynthesis; L-arginine biosynthesis; N(2)-acetyl-L-ornithine from L-glutamate: step 2/4. Its function is as follows. Catalyzes the ATP-dependent phosphorylation of N-acetyl-L-glutamate. The polypeptide is Acetylglutamate kinase (Pseudomonas savastanoi pv. phaseolicola (strain 1448A / Race 6) (Pseudomonas syringae pv. phaseolicola (strain 1448A / Race 6))).